We begin with the raw amino-acid sequence, 139 residues long: ATP synthase epsilon chain (139 aa).

It belongs to the ATPase epsilon chain family. As to quaternary structure, F-type ATPases have 2 components, CF(1) - the catalytic core - and CF(0) - the membrane proton channel. CF(1) has five subunits: alpha(3), beta(3), gamma(1), delta(1), epsilon(1). CF(0) has three main subunits: a, b and c.

The protein resides in the cell inner membrane. Its function is as follows. Produces ATP from ADP in the presence of a proton gradient across the membrane. The chain is ATP synthase epsilon chain from Actinobacillus pleuropneumoniae serotype 5b (strain L20).